The sequence spans 424 residues: Serine--tRNA ligase (424 aa).

L-serine is bound at residue 233-235 (TAE). Residue 264–266 (RRE) coordinates ATP. L-serine is bound at residue glutamate 287. Residue 351-354 (EISS) participates in ATP binding. Serine 387 is an L-serine binding site.

This sequence belongs to the class-II aminoacyl-tRNA synthetase family. Type-1 seryl-tRNA synthetase subfamily. Homodimer. The tRNA molecule binds across the dimer.

It localises to the cytoplasm. It carries out the reaction tRNA(Ser) + L-serine + ATP = L-seryl-tRNA(Ser) + AMP + diphosphate + H(+). It catalyses the reaction tRNA(Sec) + L-serine + ATP = L-seryl-tRNA(Sec) + AMP + diphosphate + H(+). It participates in aminoacyl-tRNA biosynthesis; selenocysteinyl-tRNA(Sec) biosynthesis; L-seryl-tRNA(Sec) from L-serine and tRNA(Sec): step 1/1. Functionally, catalyzes the attachment of serine to tRNA(Ser). Is also able to aminoacylate tRNA(Sec) with serine, to form the misacylated tRNA L-seryl-tRNA(Sec), which will be further converted into selenocysteinyl-tRNA(Sec). The protein is Serine--tRNA ligase of Acaryochloris marina (strain MBIC 11017).